Reading from the N-terminus, the 374-residue chain is Mitochondrial inner membrane protein oxa1-1 (374 aa).

A helical membrane pass occupies residues 77-97; it reads TINVYAGAPWWVSIILTTLGV. The Mitochondrial intermembrane portion of the chain corresponds to 98 to 159; the sequence is RLALTPVMIA…GIYLKHNVNP (62 aa). A helical membrane pass occupies residues 160–180; that stretch reads FAIFILPLTQSAVFFSFFYAI. The Mitochondrial matrix portion of the chain corresponds to 181 to 242; the sequence is RKMSRLSVDG…TIGNSTNWRT (62 aa). Residues 243–263 traverse the membrane as a helical segment; it reads FFFLCCLLSPLLTAKLPAAIF. Residues 264 to 374 lie on the Mitochondrial intermembrane side of the membrane; that stretch reads MYWIPSSLFN…SKKNSKKQSN (111 aa).

Belongs to the OXA1/ALB3/YidC family.

The protein resides in the mitochondrion inner membrane. In terms of biological role, required for the insertion of integral membrane proteins into the mitochondrial inner membrane. Essential for the activity and assembly of cytochrome c oxidase. Not essential for viability, while oxa102 is essential. When both genes are deleted the cell is non-viable, suggesting that oxa101 act as a back-up for oxa102. The polypeptide is Mitochondrial inner membrane protein oxa1-1 (oxa101) (Schizosaccharomyces pombe (strain 972 / ATCC 24843) (Fission yeast)).